A 293-amino-acid polypeptide reads, in one-letter code: ATP phosphoribosyltransferase (293 aa).

Belongs to the ATP phosphoribosyltransferase family. Long subfamily. Requires Mg(2+) as cofactor.

The protein localises to the cytoplasm. The enzyme catalyses 1-(5-phospho-beta-D-ribosyl)-ATP + diphosphate = 5-phospho-alpha-D-ribose 1-diphosphate + ATP. The protein operates within amino-acid biosynthesis; L-histidine biosynthesis; L-histidine from 5-phospho-alpha-D-ribose 1-diphosphate: step 1/9. Feedback inhibited by histidine. Its function is as follows. Catalyzes the condensation of ATP and 5-phosphoribose 1-diphosphate to form N'-(5'-phosphoribosyl)-ATP (PR-ATP). Has a crucial role in the pathway because the rate of histidine biosynthesis seems to be controlled primarily by regulation of HisG enzymatic activity. This Solidesulfovibrio magneticus (strain ATCC 700980 / DSM 13731 / RS-1) (Desulfovibrio magneticus) protein is ATP phosphoribosyltransferase.